The primary structure comprises 100 residues: NADH-quinone oxidoreductase subunit K (100 aa).

Helical transmembrane passes span 2-22 (ITLS…LIGI), 29-49 (IMLF…LAAI), and 63-83 (LFIV…LILW).

This sequence belongs to the complex I subunit 4L family. NDH-1 is composed of 14 different subunits. Subunits NuoA, H, J, K, L, M, N constitute the membrane sector of the complex.

The protein localises to the cell inner membrane. The catalysed reaction is a quinone + NADH + 5 H(+)(in) = a quinol + NAD(+) + 4 H(+)(out). Its function is as follows. NDH-1 shuttles electrons from NADH, via FMN and iron-sulfur (Fe-S) centers, to quinones in the respiratory chain. The immediate electron acceptor for the enzyme in this species is believed to be ubiquinone. Couples the redox reaction to proton translocation (for every two electrons transferred, four hydrogen ions are translocated across the cytoplasmic membrane), and thus conserves the redox energy in a proton gradient. The sequence is that of NADH-quinone oxidoreductase subunit K from Campylobacter curvus (strain 525.92).